Here is a 227-residue protein sequence, read N- to C-terminus: Cytochrome c oxidase subunit 2 (227 aa).

The Mitochondrial intermembrane portion of the chain corresponds to 1 to 14; the sequence is MAYPFQLGLQDATS. Residues 15 to 45 traverse the membrane as a helical segment; that stretch reads PIMEELTNFHDHTLMIVFLISSLVLYIISLM. The Mitochondrial matrix segment spans residues 46–59; sequence LTTKLTHTSTMDAQ. The helical transmembrane segment at 60–87 threads the bilayer; sequence EVETIWTILPAAILILIALPSLRILYMM. The Mitochondrial intermembrane portion of the chain corresponds to 88-227; it reads DEINNPVLTV…YFENWSTSMI (140 aa). Cu cation contacts are provided by His161, Cys196, Glu198, Cys200, His204, and Met207. Glu198 provides a ligand contact to Mg(2+). Position 218 is a phosphotyrosine (Tyr218).

Belongs to the cytochrome c oxidase subunit 2 family. In terms of assembly, component of the cytochrome c oxidase (complex IV, CIV), a multisubunit enzyme composed of 14 subunits. The complex is composed of a catalytic core of 3 subunits MT-CO1, MT-CO2 and MT-CO3, encoded in the mitochondrial DNA, and 11 supernumerary subunits COX4I, COX5A, COX5B, COX6A, COX6B, COX6C, COX7A, COX7B, COX7C, COX8 and NDUFA4, which are encoded in the nuclear genome. The complex exists as a monomer or a dimer and forms supercomplexes (SCs) in the inner mitochondrial membrane with NADH-ubiquinone oxidoreductase (complex I, CI) and ubiquinol-cytochrome c oxidoreductase (cytochrome b-c1 complex, complex III, CIII), resulting in different assemblies (supercomplex SCI(1)III(2)IV(1) and megacomplex MCI(2)III(2)IV(2)). Found in a complex with TMEM177, COA6, COX18, COX20, SCO1 and SCO2. Interacts with TMEM177 in a COX20-dependent manner. Interacts with COX20. Interacts with COX16. The cofactor is Cu cation.

Its subcellular location is the mitochondrion inner membrane. The enzyme catalyses 4 Fe(II)-[cytochrome c] + O2 + 8 H(+)(in) = 4 Fe(III)-[cytochrome c] + 2 H2O + 4 H(+)(out). Its function is as follows. Component of the cytochrome c oxidase, the last enzyme in the mitochondrial electron transport chain which drives oxidative phosphorylation. The respiratory chain contains 3 multisubunit complexes succinate dehydrogenase (complex II, CII), ubiquinol-cytochrome c oxidoreductase (cytochrome b-c1 complex, complex III, CIII) and cytochrome c oxidase (complex IV, CIV), that cooperate to transfer electrons derived from NADH and succinate to molecular oxygen, creating an electrochemical gradient over the inner membrane that drives transmembrane transport and the ATP synthase. Cytochrome c oxidase is the component of the respiratory chain that catalyzes the reduction of oxygen to water. Electrons originating from reduced cytochrome c in the intermembrane space (IMS) are transferred via the dinuclear copper A center (CU(A)) of subunit 2 and heme A of subunit 1 to the active site in subunit 1, a binuclear center (BNC) formed by heme A3 and copper B (CU(B)). The BNC reduces molecular oxygen to 2 water molecules using 4 electrons from cytochrome c in the IMS and 4 protons from the mitochondrial matrix. The chain is Cytochrome c oxidase subunit 2 (MT-CO2) from Arvicanthis somalicus (Neumann's grass rat).